Here is a 223-residue protein sequence, read N- to C-terminus: Ribonuclease DdI (223 aa).

An N-terminal signal peptide occupies residues 1-25 (MRLIAALLSVLLIASTAQSTVTIYE). An intrachain disulfide couples Cys-46 to Cys-51. Active-site residues include His-63, Glu-113, and His-117. Residues Cys-78 and Cys-120 are joined by a disulfide bond. A glycan (N-linked (GlcNAc...) asparagine) is linked at Asn-144. 2 disulfide bridges follow: Cys-183–Cys-213 and Cys-194–Cys-205.

The protein belongs to the RNase T2 family.

Its subcellular location is the lysosome. It carries out the reaction a ribonucleotidyl-ribonucleotide-RNA + H2O = a 3'-end 3'-phospho-ribonucleotide-RNA + a 5'-end dephospho-ribonucleoside-RNA + H(+). Its activity is regulated as follows. Inhibited by Cu(2+) and Zn(2+). In terms of biological role, releases mononucleotides from RNA in the order of 3'-GMP &gt; 3'-UMP &gt; 3'-AMP &gt; 3'-CMP. The chain is Ribonuclease DdI (ddiA) from Dictyostelium discoideum (Social amoeba).